The sequence spans 226 residues: Neuromodulin (226 aa).

Positions 1–226 are disordered; sequence MLCCMRRTKQ…EDPEADQEHA (226 aa). Residues Cys3 and Cys4 are each lipidated (S-palmitoyl cysteine). The segment covering 9 to 32 has biased composition (basic and acidic residues); sequence KQVEKNDEDQKIEQDGVKPEDKAH. Residues 31 to 60 form the IQ domain; that stretch reads AHKAATKIQASFRGHITRKKLKDEKKGDAP. Position 41 is a phosphoserine; by PHK and PKC (Ser41). The span at 51–84 shows a compositional bias: basic and acidic residues; sequence LKDEKKGDAPAAEAEAKEKDDAPVADGVEKKEGD. Over residues 85–97 the composition is skewed to low complexity; it reads GSATTDAAPATSP. Phosphoserine occurs at positions 86 and 96. Residues 98 to 127 show a composition bias toward basic and acidic residues; that stretch reads KAEEPSKAGDAPSEEKKGEGDAAPSEEKAG. A compositionally biased stretch (low complexity) spans 128–139; the sequence is SAETESAAKATT. Residues Ser142, Ser144, and Ser145 each carry the phosphoserine modification. A compositionally biased stretch (basic and acidic residues) spans 146-158; that stretch reads KAEDGPAKEEPKQ. Positions 159–192 are enriched in low complexity; the sequence is ADVPAAVTDAAATTPAAEDAAKAAQPPTETAESS. Thr172 is modified (phosphothreonine). Phosphoserine is present on residues Ser191 and Ser192. Residues 201–214 show a composition bias toward basic and acidic residues; the sequence is VDEAKPKESARQDE. The segment covering 215–226 has biased composition (acidic residues); it reads GKEDPEADQEHA.

This sequence belongs to the neuromodulin family. Identified in a complex containing FGFR4, NCAM1, CDH2, PLCG1, FRS2, SRC, SHC1, GAP43 and CTTN. Interacts (via IQ domain) with calmodulin. Binds calmodulin with a greater affinity in the absence of Ca(2+) than in its presence. In terms of processing, phosphorylated. Phosphorylation of this protein by a protein kinase C is specifically correlated with certain forms of synaptic plasticity. Palmitoylated by ZDHHC3. Palmitoylation is regulated by ARF6 and is essential for plasma membrane association and axonal and dendritic filopodia induction. Deacylated by LYPLA2. In terms of tissue distribution, expressed in hippocampal neurons, with highest levels of expression in the CA4 and CA3 neurons and lower levels in CA1 neurons. Expressed in the dorsal root ganglion.

Its subcellular location is the cell membrane. It localises to the cell projection. The protein resides in the growth cone. The protein localises to the growth cone membrane. It is found in the synapse. Its subcellular location is the filopodium membrane. It localises to the perikaryon. The protein resides in the dendrite. The protein localises to the axon. It is found in the cytoplasm. Functionally, this protein is associated with nerve growth. It is a major component of the motile 'growth cones' that form the tips of elongating axons. Plays a role in axonal and dendritic filopodia induction. This is Neuromodulin (Gap43) from Rattus norvegicus (Rat).